Consider the following 393-residue polypeptide: Elongation factor Tu (393 aa).

In terms of domain architecture, tr-type G spans 10-203; that stretch reads KPHVNIGTIG…AVDDYIPEPV (194 aa). Positions 19 to 26 are G1; the sequence is GHVDHGKT. Residue 19-26 participates in GTP binding; sequence GHVDHGKT. Residue Thr26 coordinates Mg(2+). Positions 60-64 are G2; sequence GITIS. Residues 81-84 are G3; sequence DCPG. Residues 81–85 and 136–139 contribute to the GTP site; these read DCPGH and NKVD. The G4 stretch occupies residues 136-139; sequence NKVD. The G5 stretch occupies residues 173 to 175; the sequence is SAL.

It belongs to the TRAFAC class translation factor GTPase superfamily. Classic translation factor GTPase family. EF-Tu/EF-1A subfamily. In terms of assembly, monomer.

It is found in the cytoplasm. It catalyses the reaction GTP + H2O = GDP + phosphate + H(+). GTP hydrolase that promotes the GTP-dependent binding of aminoacyl-tRNA to the A-site of ribosomes during protein biosynthesis. The chain is Elongation factor Tu from Chlorobium phaeobacteroides (strain BS1).